The primary structure comprises 476 residues: Probable cytosolic Fe-S cluster assembly factor GI11683 (476 aa).

Residues Cys-23, Cys-68, Cys-71, Cys-74, Cys-187, Cys-243, Cys-395, and Cys-399 each contribute to the [4Fe-4S] cluster site.

Belongs to the NARF family.

Its function is as follows. Component of the cytosolic iron-sulfur (Fe/S) protein assembly machinery. Required for maturation of extramitochondrial Fe/S proteins. This chain is Probable cytosolic Fe-S cluster assembly factor GI11683, found in Drosophila mojavensis (Fruit fly).